The following is a 672-amino-acid chain: Zinc finger protein 271 (672 aa).

Residues 1 to 29 (MEIQFNYESQEHHLLSDGENKTKIGKPAS) form a disordered region. Over residues 9 to 22 (SQEHHLLSDGENKT) the composition is skewed to basic and acidic residues. The segment at 80 to 102 (HNCDEYGQSFVWNTGLFRHRKTH) adopts a C2H2-type 1; degenerate zinc-finger fold. 19 C2H2-type zinc fingers span residues 107–129 (YECDKCGKAFSVSSALVLHQRIH), 135–157 (YSCNWCIKSFSRSSDLIKHQRVH), 163–185 (YKCDECGKAFSQSSDLIIHQRIH), 191–213 (YQCSHCSKSFSQRSDLVKHQRIH), 219–241 (YTCNQCNKHFSQSSDVIKHQRIH), 247–269 (YKCDVCAKAFSQSSDLILHQRIH), 275–297 (YPCNQCSKSFSQNSDLIKHRRIH), 303–325 (YKCNECGKAFNQSSVLILHQRIH), 331–353 (YPCDQCSKTFSRLSDLINHQRIH), 359–381 (YPCNQCNKMFSRRSDLVKHHRIH), 387–409 (YECDECGKTFSQSSNLILHQRIH), 415–437 (YPCSDCTKSFSRRSDLVKHQRIH), 443–465 (YACNQCDKSFSQSSDLTKHQRVH), 471–493 (YHCNSCEKAFSQSSDLILHQRIH), 499–521 (YLCTQCSKSFSQNSDLIKHQRIH), 527–549 (YKCSECRKAFSQCSALTLHQRIH), 555–577 (NPCNECGKSFSRHSDLINHQKIH), 583–605 (YKCDACGKAFSTCTDLIEHQKIH), and 611–633 (YRCVQCSRSFSQLSELTIHEEVH).

The protein belongs to the krueppel C2H2-type zinc-finger protein family.

It localises to the nucleus. Its function is as follows. May be involved in transcriptional regulation. In Pongo abelii (Sumatran orangutan), this protein is Zinc finger protein 271 (ZNF271).